The sequence spans 214 residues: Imidazole glycerol phosphate synthase subunit HisH (214 aa).

In terms of domain architecture, Glutamine amidotransferase type-1 spans 3-211; sequence TIAVIDYDMG…VSKVIPKNLA (209 aa). The active-site Nucleophile is C81. Active-site residues include H186 and E188.

Heterodimer of HisH and HisF.

It is found in the cytoplasm. The catalysed reaction is 5-[(5-phospho-1-deoxy-D-ribulos-1-ylimino)methylamino]-1-(5-phospho-beta-D-ribosyl)imidazole-4-carboxamide + L-glutamine = D-erythro-1-(imidazol-4-yl)glycerol 3-phosphate + 5-amino-1-(5-phospho-beta-D-ribosyl)imidazole-4-carboxamide + L-glutamate + H(+). It carries out the reaction L-glutamine + H2O = L-glutamate + NH4(+). It functions in the pathway amino-acid biosynthesis; L-histidine biosynthesis; L-histidine from 5-phospho-alpha-D-ribose 1-diphosphate: step 5/9. Functionally, IGPS catalyzes the conversion of PRFAR and glutamine to IGP, AICAR and glutamate. The HisH subunit catalyzes the hydrolysis of glutamine to glutamate and ammonia as part of the synthesis of IGP and AICAR. The resulting ammonia molecule is channeled to the active site of HisF. This Trichodesmium erythraeum (strain IMS101) protein is Imidazole glycerol phosphate synthase subunit HisH.